We begin with the raw amino-acid sequence, 473 residues long: Cell division protein FtsP (473 aa).

Positions 1–27 (MSFSRRQFLQASGLAVCLGSLSSSVRA) form a signal peptide, tat-type signal.

This sequence belongs to the FtsP family. In terms of processing, predicted to be exported by the Tat system. The position of the signal peptide cleavage has not been experimentally proven.

The protein resides in the periplasm. Its function is as follows. Cell division protein that is required for growth during stress conditions. May be involved in protecting or stabilizing the divisomal assembly under conditions of stress. This chain is Cell division protein FtsP, found in Proteus mirabilis (strain HI4320).